Here is a 367-residue protein sequence, read N- to C-terminus: uncharacterized protein (367 aa).

It is found in the mitochondrion. This is an uncharacterized protein from Paramecium tetraurelia.